Reading from the N-terminus, the 426-residue chain is S-adenosylmethionine synthase (426 aa).

Residue histidine 22 coordinates ATP. Aspartate 24 provides a ligand contact to Mg(2+). Glutamate 50 contacts K(+). 2 residues coordinate L-methionine: glutamate 63 and glutamine 106. Residues 106-116 form a flexible loop region; the sequence is QSPDISQGVTA. ATP contacts are provided by residues 181-183, 257-258, aspartate 266, 272-273, alanine 289, and lysine 293; these read DGK, KF, and RK. Residue aspartate 266 participates in L-methionine binding. Lysine 297 is an L-methionine binding site.

This sequence belongs to the AdoMet synthase family. As to quaternary structure, homotetramer; dimer of dimers. Mg(2+) serves as cofactor. It depends on K(+) as a cofactor.

It localises to the cytoplasm. It catalyses the reaction L-methionine + ATP + H2O = S-adenosyl-L-methionine + phosphate + diphosphate. Its pathway is amino-acid biosynthesis; S-adenosyl-L-methionine biosynthesis; S-adenosyl-L-methionine from L-methionine: step 1/1. In terms of biological role, catalyzes the formation of S-adenosylmethionine (AdoMet) from methionine and ATP. The overall synthetic reaction is composed of two sequential steps, AdoMet formation and the subsequent tripolyphosphate hydrolysis which occurs prior to release of AdoMet from the enzyme. The chain is S-adenosylmethionine synthase from Synechocystis sp. (strain ATCC 27184 / PCC 6803 / Kazusa).